Consider the following 73-residue polypeptide: UPF0352 protein HSM_0097 (73 aa).

This sequence belongs to the UPF0352 family.

The polypeptide is UPF0352 protein HSM_0097 (Histophilus somni (strain 2336) (Haemophilus somnus)).